The following is a 551-amino-acid chain: Synapse-associated protein of 47 kDa (551 aa).

Disordered stretches follow at residues 20-72 (AGDE…AGKR) and 117-198 (AMPA…GQGK). Low complexity-rich tracts occupy residues 26–59 (PAPTGDAPAAAPAASTSVEATASSAVDPEAAAAA), 117–128 (AMPAMPSIPSIP), and 137–146 (DGAEGAEGAV). Phosphoserine is present on residues Ser-178 and Ser-182. Gly residues predominate over residues 182–197 (SGGGTPTGDEGQIGQG). The residue at position 186 (Thr-186) is a Phosphothreonine. A BSD domain is found at 295–347 (VDFEFSYDTAYPTAIAIMAEDKALETMRFELVPKIITEENFWRNYFYRVSLII). Positions 360–391 (VGQASSGEDANEVATKEKKSKTAEPAKGDSSV) are disordered. The segment covering 373-386 (ATKEKKSKTAEPAK) has biased composition (basic and acidic residues). Ser-433 carries the post-translational modification Phosphoserine. A disordered region spans residues 487–551 (KDYEVVDEGG…DLIEDTDDLK (65 aa)). The span at 514-523 (DDTEADEDEP) shows a compositional bias: acidic residues. A compositionally biased stretch (polar residues) spans 524–535 (TISNLRTRSTNN). Position 530 is a phosphothreonine (Thr-530). A compositionally biased stretch (acidic residues) spans 536 to 551 (DWEEYADLIEDTDDLK).

Expressed specifically in neurons and transported to synaptic terminals.

This Drosophila melanogaster (Fruit fly) protein is Synapse-associated protein of 47 kDa (Sap47).